Consider the following 141-residue polypeptide: Nucleoside triphosphatase NudI (141 aa).

Residues 1-141 (MRQRTIVCPL…RHTLALKGLL (141 aa)) form the Nudix hydrolase domain. The short motif at 38 to 59 (GGVEPGERIEEALRREVREELG) is the Nudix box element.

This sequence belongs to the Nudix hydrolase family. NudI subfamily. Monomer. It depends on Mg(2+) as a cofactor.

It catalyses the reaction a ribonucleoside 5'-triphosphate + H2O = a ribonucleoside 5'-phosphate + diphosphate + H(+). The catalysed reaction is a 2'-deoxyribonucleoside 5'-triphosphate + H2O = a 2'-deoxyribonucleoside 5'-phosphate + diphosphate + H(+). The enzyme catalyses dUTP + H2O = dUMP + diphosphate + H(+). It carries out the reaction dTTP + H2O = dTMP + diphosphate + H(+). It catalyses the reaction dCTP + H2O = dCMP + diphosphate + H(+). Functionally, catalyzes the hydrolysis of nucleoside triphosphates, with a preference for pyrimidine deoxynucleoside triphosphates (dUTP, dTTP and dCTP). The sequence is that of Nucleoside triphosphatase NudI from Salmonella schwarzengrund (strain CVM19633).